The sequence spans 448 residues: UDP-N-acetylmuramoylalanine--D-glutamate ligase (448 aa).

UDP-N-acetyl-alpha-D-muramoyl-L-alanine contacts are provided by Lys17, Ser18, Thr38, Arg39, and Gly78. Gly116–Thr122 lines the ATP pocket. ADP is bound by residues Ala119, Lys120, Ser121, and Thr122. UDP-N-acetyl-alpha-D-muramoyl-L-alanine-binding residues include Asn143 and His188. Asn278, Arg309, Asp324, and Lys326 together coordinate ADP.

The protein belongs to the MurCDEF family.

It localises to the cytoplasm. The enzyme catalyses UDP-N-acetyl-alpha-D-muramoyl-L-alanine + D-glutamate + ATP = UDP-N-acetyl-alpha-D-muramoyl-L-alanyl-D-glutamate + ADP + phosphate + H(+). It participates in cell wall biogenesis; peptidoglycan biosynthesis. Involved in cell wall formation. Catalyzes the addition of D-glutamate to the peptidoglycan precursor UDP-N-acetylmuramoyl-L-alanine (UMA). This is UDP-N-acetylmuramoylalanine--D-glutamate ligase from Pseudomonas aeruginosa (strain ATCC 15692 / DSM 22644 / CIP 104116 / JCM 14847 / LMG 12228 / 1C / PRS 101 / PAO1).